The chain runs to 227 residues: Phosphoribosylformylglycinamidine synthase subunit PurQ (227 aa).

The region spanning 3 to 225 (FAVIVFPGSN…LKQWRETYVV (223 aa)) is the Glutamine amidotransferase type-1 domain. C86 (nucleophile) is an active-site residue. Active-site residues include H194 and E196.

In terms of assembly, part of the FGAM synthase complex composed of 1 PurL, 1 PurQ and 2 PurS subunits.

The protein resides in the cytoplasm. It carries out the reaction N(2)-formyl-N(1)-(5-phospho-beta-D-ribosyl)glycinamide + L-glutamine + ATP + H2O = 2-formamido-N(1)-(5-O-phospho-beta-D-ribosyl)acetamidine + L-glutamate + ADP + phosphate + H(+). It catalyses the reaction L-glutamine + H2O = L-glutamate + NH4(+). The protein operates within purine metabolism; IMP biosynthesis via de novo pathway; 5-amino-1-(5-phospho-D-ribosyl)imidazole from N(2)-formyl-N(1)-(5-phospho-D-ribosyl)glycinamide: step 1/2. Its function is as follows. Part of the phosphoribosylformylglycinamidine synthase complex involved in the purines biosynthetic pathway. Catalyzes the ATP-dependent conversion of formylglycinamide ribonucleotide (FGAR) and glutamine to yield formylglycinamidine ribonucleotide (FGAM) and glutamate. The FGAM synthase complex is composed of three subunits. PurQ produces an ammonia molecule by converting glutamine to glutamate. PurL transfers the ammonia molecule to FGAR to form FGAM in an ATP-dependent manner. PurS interacts with PurQ and PurL and is thought to assist in the transfer of the ammonia molecule from PurQ to PurL. This chain is Phosphoribosylformylglycinamidine synthase subunit PurQ, found in Bacillus cereus (strain 03BB102).